The sequence spans 274 residues: uncharacterized protein (274 aa).

This is an uncharacterized protein from Bacillus subtilis (strain 168).